A 198-amino-acid polypeptide reads, in one-letter code: Segregation and condensation protein B (198 aa).

The disordered stretch occupies residues 167-198 (PKLADPEAEDPDQSEMDLFFDRFNQSKEQEEE). The segment covering 172–181 (PEAEDPDQSE) has biased composition (acidic residues).

The protein belongs to the ScpB family. As to quaternary structure, homodimer. Homodimerization may be required to stabilize the binding of ScpA to the Smc head domains. Component of a cohesin-like complex composed of ScpA, ScpB and the Smc homodimer, in which ScpA and ScpB bind to the head domain of Smc. The presence of the three proteins is required for the association of the complex with DNA.

It is found in the cytoplasm. Functionally, participates in chromosomal partition during cell division. May act via the formation of a condensin-like complex containing Smc and ScpA that pull DNA away from mid-cell into both cell halves. In Listeria innocua serovar 6a (strain ATCC BAA-680 / CLIP 11262), this protein is Segregation and condensation protein B.